We begin with the raw amino-acid sequence, 81 residues long: Neuronatin (81 aa).

Belongs to the neuronatin family.

In terms of biological role, may participate in the maintenance of segment identity in the hindbrain and pituitary development, and maturation or maintenance of the overall structure of the nervous system. May function as a regulatory subunit of ion channels. This is Neuronatin (NNAT) from Sus scrofa (Pig).